We begin with the raw amino-acid sequence, 552 residues long: Amino-acid acetyltransferase, mitochondrial (552 aa).

The N-terminal 32 residues, 1-32, are a transit peptide targeting the mitochondrion; it reads MIKTWIRCLTTEVRYHQPNAHGRSLVMSVLNS. The N-acetyltransferase domain maps to 379-545; it reads QTGKSDPVSK…LRDYAKYVRD (167 aa).

Belongs to the acetyltransferase family.

Its subcellular location is the mitochondrion. It catalyses the reaction L-glutamate + acetyl-CoA = N-acetyl-L-glutamate + CoA + H(+). It functions in the pathway amino-acid biosynthesis; L-arginine biosynthesis; N(2)-acetyl-L-ornithine from L-glutamate: step 1/4. Its function is as follows. N-acetylglutamate synthase involved in arginine biosynthesis. The sequence is that of Amino-acid acetyltransferase, mitochondrial (ARG2) from Kluyveromyces lactis (strain ATCC 8585 / CBS 2359 / DSM 70799 / NBRC 1267 / NRRL Y-1140 / WM37) (Yeast).